A 71-amino-acid polypeptide reads, in one-letter code: Dermaseptin-PT9 (71 aa).

A signal peptide spans 1 to 22; it reads MAFLKKSLFLVLFLGLVSLSIC. Positions 23–43 are excised as a propeptide; it reads EEEKRENEMEQEDDEQSEMKR. The residue at position 68 (valine 68) is a Valine amide. Positions 69-71 are excised as a propeptide; that stretch reads GEQ.

It belongs to the frog skin active peptide (FSAP) family. Dermaseptin subfamily. Expressed by the skin glands.

Its subcellular location is the secreted. The protein localises to the target cell membrane. Functionally, antimicrobial peptide with activity against fungi, Gram-positive and Gram-negative bacteria. Is active against S.aureus (MIC=16 uM), MRSA (MIC=32 uM), E.faecalis (MIC=16 uM), E.coli (MIC=8 uM), P.aeruginosa (MIC=16 uM), K.pneumoniae (MIC=8 uM), and C.albicans (MIC=64 uM). Also inhibits biofilm formation. Acts by disrupting cell membranes. Also exhibits anti-proliferative effect against various human cancer cells. Shows weak hemolytic activity towards horse erythrocytes. This chain is Dermaseptin-PT9, found in Phyllomedusa tarsius (Brownbelly leaf frog).